The primary structure comprises 343 residues: Small ribosomal subunit biogenesis GTPase RsgA (343 aa).

Positions 116-275 (HGQLKPVAAN…LIDSPGIREF (160 aa)) constitute a CP-type G domain. GTP-binding positions include 163–166 (NKAD) and 217–225 (GQSGVGKSS). Positions 299, 304, 306, and 312 each coordinate Zn(2+).

This sequence belongs to the TRAFAC class YlqF/YawG GTPase family. RsgA subfamily. Monomer. Associates with 30S ribosomal subunit, binds 16S rRNA. Requires Zn(2+) as cofactor.

It localises to the cytoplasm. Its function is as follows. One of several proteins that assist in the late maturation steps of the functional core of the 30S ribosomal subunit. Helps release RbfA from mature subunits. May play a role in the assembly of ribosomal proteins into the subunit. Circularly permuted GTPase that catalyzes slow GTP hydrolysis, GTPase activity is stimulated by the 30S ribosomal subunit. This Pseudomonas putida (strain ATCC 700007 / DSM 6899 / JCM 31910 / BCRC 17059 / LMG 24140 / F1) protein is Small ribosomal subunit biogenesis GTPase RsgA.